We begin with the raw amino-acid sequence, 356 residues long: 5-formaminoimidazole-4-carboxamide-1-(beta)-D-ribofuranosyl 5'-monophosphate synthetase 2 (356 aa).

Histidine 27 and serine 94 together coordinate 5-amino-1-(5-phospho-beta-D-ribosyl)imidazole-4-carboxamide. Residues 101 to 333 form the ATP-grasp domain; the sequence is RENFTGMAVP…YSDLMQKRLS (233 aa). ATP is bound by residues 145–196 and glutamate 226; that span reads PHDI…TRYD. Residue asparagine 255 participates in 5-amino-1-(5-phospho-beta-D-ribosyl)imidazole-4-carboxamide binding. 2 residues coordinate Mg(2+): glutamate 293 and glutamate 306.

It belongs to the phosphohexose mutase family. The cofactor is Mg(2+). Mn(2+) is required as a cofactor.

The catalysed reaction is 5-amino-1-(5-phospho-beta-D-ribosyl)imidazole-4-carboxamide + formate + ATP = 5-formamido-1-(5-phospho-D-ribosyl)imidazole-4-carboxamide + ADP + phosphate. The protein operates within purine metabolism; IMP biosynthesis via de novo pathway; 5-formamido-1-(5-phospho-D-ribosyl)imidazole-4-carboxamide from 5-amino-1-(5-phospho-D-ribosyl)imidazole-4-carboxamide (formate route): step 1/1. Functionally, catalyzes the ATP- and formate-dependent formylation of 5-aminoimidazole-4-carboxamide-1-beta-d-ribofuranosyl 5'-monophosphate (AICAR) to 5-formaminoimidazole-4-carboxamide-1-beta-d-ribofuranosyl 5'-monophosphate (FAICAR) in the absence of folates. The sequence is that of 5-formaminoimidazole-4-carboxamide-1-(beta)-D-ribofuranosyl 5'-monophosphate synthetase 2 from Methanosarcina mazei (strain ATCC BAA-159 / DSM 3647 / Goe1 / Go1 / JCM 11833 / OCM 88) (Methanosarcina frisia).